We begin with the raw amino-acid sequence, 103 residues long: ATP synthase F(0) complex subunit g, mitochondrial (103 aa).

An N-acetylalanine modification is found at Ala2. 4 positions are modified to N6-acetyllysine: Lys11, Lys24, Lys35, and Lys54.

As to quaternary structure, component of the ATP synthase complex composed at least of ATP5F1A/subunit alpha, ATP5F1B/subunit beta, ATP5MC1/subunit c (homooctomer), MT-ATP6/subunit a, MT-ATP8/subunit 8, ATP5ME/subunit e, ATP5MF/subunit f, ATP5MG/subunit g, ATP5MK/subunit k, ATP5MJ/subunit j, ATP5F1C/subunit gamma, ATP5F1D/subunit delta, ATP5F1E/subunit epsilon, ATP5PF/subunit F6, ATP5PB/subunit b, ATP5PD/subunit d, ATP5PO/subunit OSCP. ATP synthase complex consists of a soluble F(1) head domain (subunits alpha(3) and beta(3)) - the catalytic core - and a membrane F(0) domain - the membrane proton channel (subunits c, a, 8, e, f, g, k and j). These two domains are linked by a central stalk (subunits gamma, delta, and epsilon) rotating inside the F1 region and a stationary peripheral stalk (subunits F6, b, d, and OSCP).

The protein localises to the mitochondrion. Its subcellular location is the mitochondrion inner membrane. Subunit g, of the mitochondrial membrane ATP synthase complex (F(1)F(0) ATP synthase or Complex V) that produces ATP from ADP in the presence of a proton gradient across the membrane which is generated by electron transport complexes of the respiratory chain. ATP synthase complex consist of a soluble F(1) head domain - the catalytic core - and a membrane F(1) domain - the membrane proton channel. These two domains are linked by a central stalk rotating inside the F(1) region and a stationary peripheral stalk. During catalysis, ATP synthesis in the catalytic domain of F(1) is coupled via a rotary mechanism of the central stalk subunits to proton translocation. In vivo, can only synthesize ATP although its ATP hydrolase activity can be activated artificially in vitro. Part of the complex F(0) domain. This Bos taurus (Bovine) protein is ATP synthase F(0) complex subunit g, mitochondrial.